Here is a 1420-residue protein sequence, read N- to C-terminus: MILRRLLLAGSLLLATAFTSAKKADGPKISVTKFKDEPVNLFYFDDSDTVMFQDGKNGDVYVSRDAGANWDIVDVSGMRGKAWSLLPHPTDRTKAYIMSNGGTHWVTEDQAKSWREFTVDADLSRYEYPLVFHGKDSNRVMLLGHKCNGLDCKEKTYYTTDGFKTAHLLMENGRHCAWAVSTPTFGEGLDLPKEVNDRIFCVVSGLHSSWAEANRLLYSDRFFKDEQGTEVPLDNGRAVSGVIRTASVQKYILAATKSARTNELALFVTDNASTWHRTEFDGHRVEEDAYTILESTSYSLQVDVVSTYSSTIGTLFTSNSNGTYFTRNIEHTNRNMYGFVDFEKISSIQGIILVNTVKNWEDVEKSNGVQKKVISKISFDDGRTFQPLKVGKHDLHLHSVTDATNSGRVFSSPAPGLVMGVGNTGGHLKDYLDGDLFVSDDAGINLEEKLWTMLINMNSVIKASNWHKASLPDGVQIRAKVLTTAPGSTTLKFLLLGSAKADIGMEYYIISIDFAEMEDALVRRKTSKIGCQIERENEPDADGHKHPDAPEGVCKNPDDKFTGSSGFRLIPGNVCIREGGVDLDKQTERVCSETFKNPPAGQIVVEKSFFTADYYKDYFYLERKESSKGEDETVIMITSEQQIFLSRDHGKKWKQILEEEKITRIEPHRFFDDVAYFLTNNGDGWYTLDRGDTFRKFKAPLPPNQDKLPVLSFHPDRRDWLIWTGADECNGNGGNCHSVAYYTTNLGGEWHFLMRYVRRCEFISRDARGSSDKLVFCEQFENENPSNKHLQLLSTEDWFAEKRLHYSNILDFATMQEFIIVAIRGENSQDSLRIGVSIDGKTFADAELPANVQIPIQRAYTVLESRTHAAFLHVTINNIEDHEYGSIIKSNSNGTSYVLSLSAVNRNSRGYADFEKMQGLEGVAMANVVGNVADVENGAAKKFRTMITHNDGAEWTLMRPPDKDSEGRSYACSTKGGKPTDACALHLHSYTERADPRDTYSSPSAVGIMIGTGNVGDYLSLKSKADTFITRDAGITWEEVKKGKYQWEFGDSGSIIVLVPESTPTKTLLYSLDEGRSWKDFEFSEVEMQIQDISTVPSDTSRNFLLWGKEVGQGKKPGIATVNIDFSGLKERSKQCVLDEKKPEADDYYLWEPKHPLQPNGCLFGHRAKYHRKRPDKDCYNGRELQHLDSIGDICECTRSDYECDYNYEPQSDGSCARVAGLEPLDPKLVCTENPKAVEWYEPTGYRRIPLTKCQGGKQLNHIVAHPCPNKEEEFFKKHPRLRGIGLFFVILIPICLAATAGYYVYNHWDGKFGRIRLGETGSGGLFDRDSLLVSIPVSMVAGVVAVITALPLLVSSLWRSVSGYVRVPGGASSRRPYSSRDSFAARRSDYVGVVEDEDELLGTDDFDDDEEGDERNGQV.

Positions 1–21 (MILRRLLLAGSLLLATAFTSA) are cleaved as a signal peptide. Residues 22-1284 (KKADGPKISV…FFKKHPRLRG (1263 aa)) lie on the Lumenal side of the membrane. Residues 61 to 71 (YVSRDAGANWD) form a BNR 1 repeat. Asn271 and Asn321 each carry an N-linked (GlcNAc...) asparagine glycan. BNR repeat units follow at residues 377–386 (ISFDDGRTFQ) and 644–654 (FLSRDHGKKWK). N-linked (GlcNAc...) asparagine glycosylation is present at Asn893. 2 BNR repeats span residues 1028–1038 (FITRDAGITWE) and 1070–1079 (YSLDEGRSWK). A helical membrane pass occupies residues 1285–1305 (IGLFFVILIPICLAATAGYYV). The Cytoplasmic segment spans residues 1306–1331 (YNHWDGKFGRIRLGETGSGGLFDRDS). The chain crosses the membrane as a helical span at residues 1332–1352 (LLVSIPVSMVAGVVAVITALP). Residues 1353-1420 (LLVSSLWRSV…EEGDERNGQV (68 aa)) are Lumenal-facing. A compositionally biased stretch (acidic residues) spans 1397-1414 (DEDELLGTDDFDDDEEGD). A disordered region spans residues 1397–1420 (DEDELLGTDDFDDDEEGDERNGQV).

This sequence belongs to the VPS10-related sortilin family.

Its subcellular location is the golgi apparatus. It is found in the trans-Golgi network membrane. The protein localises to the prevacuolar compartment membrane. Its function is as follows. Functions as a sorting receptor in the Golgi compartment required for the intracellular sorting and delivery of soluble vacuolar proteins, like carboxypeptidase Y (CPY) and proteinase A. Executes multiple rounds of sorting by cycling between the late Golgi and a prevacuolar endosome-like compartment. This chain is Vacuolar protein sorting/targeting protein 10 (VPS10), found in Ajellomyces capsulatus (strain H143) (Darling's disease fungus).